A 331-amino-acid chain; its full sequence is D/L-glyceraldehyde reductase (331 aa).

Catalysis depends on Tyr51, which acts as the Proton donor. His114 is a substrate binding site. NADP(+) is bound at residue 213-276 (SAFGNNTKGL…SVTKARIAEN (64 aa)).

It belongs to the aldo/keto reductase family.

The enzyme catalyses glycerol + NADP(+) = L-glyceraldehyde + NADPH + H(+). It carries out the reaction glycerol + NADP(+) = D-glyceraldehyde + NADPH + H(+). Its pathway is carbohydrate acid metabolism. Its function is as follows. Mediates the conversion of L-glyceraldehyde to glycerol in D-galacturonate catabolic process. Also able to reduce D-glyceraldehyde. The protein is D/L-glyceraldehyde reductase (gld1) of Hypocrea jecorina (Trichoderma reesei).